Consider the following 125-residue polypeptide: Glycine cleavage system H protein (125 aa).

The Lipoyl-binding domain maps to 19–101 (GAVVGITDFA…NGSGWFFKLT (83 aa)). Residue K60 is modified to N6-lipoyllysine.

This sequence belongs to the GcvH family. As to quaternary structure, the glycine cleavage system is composed of four proteins: P, T, L and H. The cofactor is (R)-lipoate.

The glycine cleavage system catalyzes the degradation of glycine. The H protein shuttles the methylamine group of glycine from the P protein to the T protein. In Methylocella silvestris (strain DSM 15510 / CIP 108128 / LMG 27833 / NCIMB 13906 / BL2), this protein is Glycine cleavage system H protein.